Consider the following 447-residue polypeptide: Methyl-coenzyme M reductase II subunit beta (447 aa).

Residue Tyr-368 coordinates coenzyme M. Position 370 (Gly-370) interacts with coenzyme B.

This sequence belongs to the methyl-coenzyme M reductase beta subunit family. MCR is a hexamer of two alpha, two beta, and two gamma chains, forming a dimer of heterotrimers. Requires coenzyme F430 as cofactor.

The catalysed reaction is coenzyme B + methyl-coenzyme M = methane + coenzyme M-coenzyme B heterodisulfide. It functions in the pathway one-carbon metabolism; methyl-coenzyme M reduction; methane from methyl-coenzyme M: step 1/1. Its function is as follows. Component of the methyl-coenzyme M reductase (MCR) I that catalyzes the reductive cleavage of methyl-coenzyme M (CoM-S-CH3 or 2-(methylthio)ethanesulfonate) using coenzyme B (CoB or 7-mercaptoheptanoylthreonine phosphate) as reductant which results in the production of methane and the mixed heterodisulfide of CoB and CoM (CoM-S-S-CoB). This is the final step in methanogenesis. This chain is Methyl-coenzyme M reductase II subunit beta (mrtB), found in Methanocaldococcus jannaschii (strain ATCC 43067 / DSM 2661 / JAL-1 / JCM 10045 / NBRC 100440) (Methanococcus jannaschii).